Consider the following 764-residue polypeptide: Zygote defective protein 12 (764 aa).

Residues methionine 1–alanine 20 show a composition bias toward polar residues. The segment at methionine 1–arginine 33 is disordered. Residues methionine 1–glycine 236 are interaction with dli-1. The Calponin-homology (CH) domain occupies arginine 43–glutamine 169. Coiled coils occupy residues leucine 244–threonine 405 and glycine 436–isoleucine 692. The chain crosses the membrane as a helical span at residues alanine 732 to isoleucine 752.

This sequence belongs to the hook family. As to quaternary structure, homodimer. Interacts with the dynein subunit dli-1 via its N-terminus. May interact with microtubules.

The protein resides in the nucleus membrane. It localises to the cytoplasm. Its subcellular location is the cytoskeleton. It is found in the microtubule organizing center. The protein localises to the centrosome. In terms of biological role, cytoskeletal linker protein, which is essential for attachment of the centrosome to the nucleus. Required for dynein localization to the nuclear envelope. The polypeptide is Zygote defective protein 12 (zyg-12) (Caenorhabditis briggsae).